The chain runs to 123 residues: WAP four-disulfide core domain protein 5 (123 aa).

Residues 1–24 (MRIQSLLLLGALLAVGSQLPAVFG) form the signal peptide. 2 consecutive WAP domains span residues 27-73 (KGEK…CVPR) and 74-121 (VSVK…RDPA). 8 cysteine pairs are disulfide-bonded: Cys34-Cys62, Cys41-Cys66, Cys49-Cys61, Cys55-Cys70, Cys81-Cys109, Cys88-Cys113, Cys96-Cys108, and Cys102-Cys117.

It localises to the secreted. In terms of biological role, putative acid-stable proteinase inhibitor. The protein is WAP four-disulfide core domain protein 5 (WFDC5) of Chlorocebus aethiops (Green monkey).